The following is a 198-amino-acid chain: Peptide methionine sulfoxide reductase MsrA 2 (198 aa).

Cys32 is an active-site residue.

This sequence belongs to the MsrA Met sulfoxide reductase family.

The enzyme catalyses L-methionyl-[protein] + [thioredoxin]-disulfide + H2O = L-methionyl-(S)-S-oxide-[protein] + [thioredoxin]-dithiol. It carries out the reaction [thioredoxin]-disulfide + L-methionine + H2O = L-methionine (S)-S-oxide + [thioredoxin]-dithiol. In terms of biological role, has an important function as a repair enzyme for proteins that have been inactivated by oxidation. Catalyzes the reversible oxidation-reduction of methionine sulfoxide in proteins to methionine. The protein is Peptide methionine sulfoxide reductase MsrA 2 (msrA2) of Rhizobium meliloti (strain 1021) (Ensifer meliloti).